The primary structure comprises 507 residues: Transcription factor SOX-9 (507 aa).

Disordered regions lie at residues 1–67 and 160–250; these read MNLL…SEED and RLRV…AGKV. A compositionally biased stretch (low complexity) spans 30-41; the sequence is SAGSPCPSGSGS. A compositionally biased stretch (polar residues) spans 42–52; sequence DTENTRPQENT. Composition is skewed to basic and acidic residues over residues 56–67 and 160–174; these read GEPDLKKESEED and RLRV…DYKY. A dimerization (DIM) region spans residues 63–103; the sequence is ESEEDKFPVCIREAVSQVLKGYDWTLVPMPVRVNGSSKNKP. The tract at residues 63 to 103 is PQA; it reads ESEEDKFPVCIREAVSQVLKGYDWTLVPMPVRVNGSSKNKP. Ser-64 bears the Phosphoserine mark. Positions 105–173 form a DNA-binding region, HMG box; sequence VKRPMNAFMV…QHKKDHPDYK (69 aa). Ser-211 carries the phosphoserine modification. Residues 224–307 form a transactivation domain (TAM) region; that stretch reads PGEHSGQSQG…LPPNGHPGVP (84 aa). 2 consecutive short sequence motifs (9aaTAD) follow at residues 275-284 and 290-298; these read IGELSSDVIS and DVNEFDQYL. The disordered stretch occupies residues 335 to 429; the sequence is WMSKQQAPPP…PFNLPHYNPS (95 aa). A compositionally biased stretch (pro residues) spans 341 to 369; sequence APPPPPQQPPQAPQAPQAPPQQQAPPQPQ. The segment covering 378 to 420 has biased composition (polar residues); the sequence is HTLTTLSSEPGQSQRTHIKTEQLSPSHYSEQQQHSPQQISYSP. The transactivation domain (TAC) stretch occupies residues 392 to 507; that stretch reads RTHIKTEQLS…QPVYTQLTRP (116 aa). A Glycyl lysine isopeptide (Lys-Gly) (interchain with G-Cter in ubiquitin) cross-link involves residue Lys-396. The short motif at 458-466 is the 9aaTAD 3 element; sequence SGLYSTFTY. The segment at 477-507 is disordered; sequence PIADTSGVPSIPQTHSPQHWEQPVYTQLTRP. The span at 483–507 shows a compositional bias: polar residues; that stretch reads GVPSIPQTHSPQHWEQPVYTQLTRP.

Homodimer; homodimerization is required for activity. Interacts (via C-terminus) with ZNF219; forming a complex that binds to the COL2A1 promoter and activates COL2A1 expression. Interacts with DDRGK1. Interacts with EP300/p300. Interacts with beta-catenin (CTNNB1); inhibiting CTNNB1 activity by competing with the binding sites of TCF/LEF within CTNNB1. Post-translationally, acetylated; acetylation impairs nuclear localization and ability to transactivate expression of target genes. Deacetylated by SIRT1. Phosphorylation at Ser-64 and Ser-211 by PKA increases transcriptional activity and may help delay chondrocyte maturation downstream of PTHLH/PTHrP signaling. Phosphorylation at either Ser-64 or Ser-211 is required for sumoylation, but phosphorylation is not dependent on sumoylation. Phosphorylated on tyrosine residues; tyrosine dephosphorylation by PTPN11/SHP2 blocks SOX9 phosphorylation by PKA and subsequent SUMOylation. In terms of processing, sumoylated; phosphorylation at either Ser-64 or Ser-211 is required for sumoylation. Sumoylation is induced by BMP signaling pathway. Post-translationally, ubiquitinated; ubiquitination leads to proteasomal degradation and is negatively regulated by DDRGK1.

The protein localises to the nucleus. Functionally, transcription factor that plays a key role in chondrocytes differentiation and skeletal development. Specifically binds the 5'-ACAAAG-3' DNA motif present in enhancers and super-enhancers and promotes expression of genes important for chondrogenesis, including cartilage matrix protein-coding genes COL2A1, COL4A2, COL9A1, COL11A2 and ACAN, SOX5 and SOX6. Also binds to some promoter regions. Plays a central role in successive steps of chondrocyte differentiation. Absolutely required for precartilaginous condensation, the first step in chondrogenesis during which skeletal progenitors differentiate into prechondrocytes. Together with SOX5 and SOX6, required for overt chondrogenesis when condensed prechondrocytes differentiate into early stage chondrocytes, the second step in chondrogenesis. Later, required to direct hypertrophic maturation and block osteoblast differentiation of growth plate chondrocytes: maintains chondrocyte columnar proliferation, delays prehypertrophy and then prevents osteoblastic differentiation of chondrocytes by lowering beta-catenin (CTNNB1) signaling and RUNX2 expression. Also required for chondrocyte hypertrophy, both indirectly, by keeping the lineage fate of chondrocytes, and directly, by remaining present in upper hypertrophic cells and transactivating COL10A1 along with MEF2C. Low lipid levels are the main nutritional determinant for chondrogenic commitment of skeletal progenitor cells: when lipids levels are low, FOXO (FOXO1 and FOXO3) transcription factors promote expression of SOX9, which induces chondrogenic commitment and suppresses fatty acid oxidation. Mechanistically, helps, but is not required, to remove epigenetic signatures of transcriptional repression and deposit active promoter and enhancer marks at chondrocyte-specific genes. Acts in cooperation with the Hedgehog pathway-dependent GLI (GLI1 and GLI3) transcription factors. In addition to cartilage development, also acts as a regulator of proliferation and differentiation in epithelial stem/progenitor cells: involved in the lung epithelium during branching morphogenesis, by balancing proliferation and differentiation and regulating the extracellular matrix. Controls epithelial branching during kidney development. The polypeptide is Transcription factor SOX-9 (Rattus norvegicus (Rat)).